Reading from the N-terminus, the 116-residue chain is Large ribosomal subunit protein bL19 (116 aa).

Belongs to the bacterial ribosomal protein bL19 family.

In terms of biological role, this protein is located at the 30S-50S ribosomal subunit interface and may play a role in the structure and function of the aminoacyl-tRNA binding site. The polypeptide is Large ribosomal subunit protein bL19 (Flavobacterium johnsoniae (strain ATCC 17061 / DSM 2064 / JCM 8514 / BCRC 14874 / CCUG 350202 / NBRC 14942 / NCIMB 11054 / UW101) (Cytophaga johnsonae)).